A 104-amino-acid polypeptide reads, in one-letter code: UPF0213 protein in VLF1-GP41 intergenic region (104 aa).

The GIY-YIG domain maps to 9 to 89 (KVWCVYILRQ…SKYFKLRLIK (81 aa)).

The protein belongs to the UPF0213 family.

In Autographa californica nuclear polyhedrosis virus (AcMNPV), this protein is UPF0213 protein in VLF1-GP41 intergenic region.